Consider the following 455-residue polypeptide: Exodeoxyribonuclease 7 large subunit (455 aa).

The protein belongs to the XseA family. In terms of assembly, heterooligomer composed of large and small subunits.

It localises to the cytoplasm. The catalysed reaction is Exonucleolytic cleavage in either 5'- to 3'- or 3'- to 5'-direction to yield nucleoside 5'-phosphates.. In terms of biological role, bidirectionally degrades single-stranded DNA into large acid-insoluble oligonucleotides, which are then degraded further into small acid-soluble oligonucleotides. This is Exodeoxyribonuclease 7 large subunit from Escherichia coli O7:K1 (strain IAI39 / ExPEC).